The sequence spans 118 residues: Beta-elicitin cryptogein (118 aa).

The signal sequence occupies residues 1–20; the sequence is MNFTALLAAVAAALVGSANA. 3 disulfide bridges follow: C23-C91, C47-C76, and C71-C115.

Belongs to the elicitin family.

Its subcellular location is the secreted. Functionally, induces local and distal defense responses (incompatible hypersensitive reaction) in plants from the solanaceae and cruciferae families. Elicits leaf necrosis and causes the accumulation of pathogenesis-related proteins. Might interact with the lipidic molecules of the plasma membrane. The chain is Beta-elicitin cryptogein from Phytophthora cryptogea.